The sequence spans 176 residues: MKASGTLREYKVVGRCLPTPKCHTPPLYRMRIFAPNHVVAKSRFWYFVSQLKKMKKSSGEIVYCGQVFEKSPLRVKNFGIWLRYDSRSGTHNMYREYRDLTTAGAVTQCYRDMGARHRARAHSIQIMKVEEIAAGKCRRPAVKQFHDSKIKFPLPHRVLRRQHKPRFTTKRPNTFF.

Lys-11 is covalently cross-linked (Glycyl lysine isopeptide (Lys-Gly) (interchain with G-Cter in SUMO2)). Tyr-63 bears the Phosphotyrosine mark. Phosphoserine is present on Ser-71. Lys-76 carries the post-translational modification N6-succinyllysine. A Phosphoserine modification is found at Ser-123. Glycyl lysine isopeptide (Lys-Gly) (interchain with G-Cter in SUMO2) cross-links involve residues Lys-128 and Lys-170.

It belongs to the eukaryotic ribosomal protein eL20 family. As to quaternary structure, component of the large ribosomal subunit. Binds IPO9 with high affinity.

The protein localises to the cytoplasm. In terms of biological role, component of the large ribosomal subunit. The ribosome is a large ribonucleoprotein complex responsible for the synthesis of proteins in the cell. The polypeptide is Large ribosomal subunit protein eL20 (Rpl18a) (Mus musculus (Mouse)).